The following is a 726-amino-acid chain: Catalase-peroxidase (726 aa).

A cross-link (tryptophyl-tyrosyl-methioninium (Trp-Tyr) (with M-240)) is located at residues 91–214 (WHAAGTYRIG…LAAVQMGLIY (124 aa)). His92 (proton acceptor) is an active-site residue. Positions 214-240 (YVNPEGPNGNPDPVAAAIDIRETFRRM) form a cross-link, tryptophyl-tyrosyl-methioninium (Tyr-Met) (with W-91). His255 is a binding site for heme b. Residues 335-362 (AHQWKPKGNAGAGTVPDPADPSKRRSPS) form a disordered region.

The protein belongs to the peroxidase family. Peroxidase/catalase subfamily. Homodimer or homotetramer. Requires heme b as cofactor. Formation of the three residue Trp-Tyr-Met cross-link is important for the catalase, but not the peroxidase activity of the enzyme.

The enzyme catalyses H2O2 + AH2 = A + 2 H2O. It carries out the reaction 2 H2O2 = O2 + 2 H2O. In terms of biological role, bifunctional enzyme with both catalase and broad-spectrum peroxidase activity. This Cupriavidus metallidurans (strain ATCC 43123 / DSM 2839 / NBRC 102507 / CH34) (Ralstonia metallidurans) protein is Catalase-peroxidase.